A 340-amino-acid chain; its full sequence is MSIIDPVNKSKVPQEWINKSNIPGDELEEGIMSGMLVVLSDGSILKRGYTTGTTATVAAKAAVLSLKKEIDHVSVPTPVGLRAHMDVKAKDGHAVAVKLNNDHESDITRGLEFVARAVESDKITITAGEGIGIVTRGGLQSKKGYPAINPRPMQQIMEAVVEAVEEIGIKGASVEISLPRGAEIAKQTLNGRIGVEGGISILGTTGFVEPWNDHLGEMKSDLIRDAAKVVLTTGRIGIRYSTMLFPDYTVVLAGSRISEFMESATGKVAICGLPGLVLKWGDPDMLKDSGFATVSEMIEVEPQGEHIRRAFEKTVEKGKGARIVVVDRDGTVLMDSGEQE.

This sequence belongs to the CbiD family.

The catalysed reaction is Co-precorrin-5B + S-adenosyl-L-methionine = Co-precorrin-6A + S-adenosyl-L-homocysteine. It functions in the pathway cofactor biosynthesis; adenosylcobalamin biosynthesis; cob(II)yrinate a,c-diamide from sirohydrochlorin (anaerobic route): step 6/10. Functionally, catalyzes the methylation of C-1 in cobalt-precorrin-5B to form cobalt-precorrin-6A. This is Cobalt-precorrin-5B C(1)-methyltransferase from Methanococcoides burtonii (strain DSM 6242 / NBRC 107633 / OCM 468 / ACE-M).